A 129-amino-acid polypeptide reads, in one-letter code: Small ribosomal subunit protein uS9 (129 aa).

It belongs to the universal ribosomal protein uS9 family.

In Nitratiruptor sp. (strain SB155-2), this protein is Small ribosomal subunit protein uS9.